Consider the following 474-residue polypeptide: Probable dipeptidase B (474 aa).

Cysteine 11 is a catalytic residue.

The protein belongs to the peptidase C69 family.

It carries out the reaction an L-aminoacyl-L-amino acid + H2O = 2 an L-alpha-amino acid. This chain is Probable dipeptidase B (pepDB), found in Lactococcus lactis subsp. lactis (strain IL1403) (Streptococcus lactis).